We begin with the raw amino-acid sequence, 342 residues long: Antihemorrhagic factor cHLP-B (342 aa).

Positions 1–19 are cleaved as a signal peptide; the sequence is MNSLVALVLLGQMIGSTLS. 2 Cystatin fetuin-A-type domains span residues 20–129 and 140–253; these read HHLQ…AKCH and RNCP…SDCV. 6 cysteine pairs are disulfide-bonded: cysteine 28/cysteine 333, cysteine 85/cysteine 96, cysteine 110/cysteine 128, cysteine 142/cysteine 145, cysteine 204/cysteine 216, and cysteine 229/cysteine 252. N-linked (GlcNAc...) asparagine glycosylation is present at asparagine 95. A glycan (N-linked (GlcNAc...) asparagine) is linked at asparagine 203. N-linked (GlcNAc...) asparagine glycosylation is found at asparagine 281 and asparagine 292.

Belongs to the fetuin family. In terms of assembly, homodimer. Expressed by the liver.

The protein resides in the secreted. Potent inhibitor of hemorrhagic activity but also proteolytic activities. Inhibition occurs by formation of a non-covalent complex between this protein and the proteinases at their metalloproteinase domains. This is Antihemorrhagic factor cHLP-B from Gloydius brevicauda (Korean slamosa snake).